The primary structure comprises 213 residues: Heavy metal-binding protein HIP (213 aa).

In terms of domain architecture, C1q spans 80–213 (FKSHHVAFSA…MSTFTGFMLH (134 aa)).

In terms of tissue distribution, pallium, gill and liver.

It localises to the secreted. Functionally, binds heavy metals. May function as a carrier of divalent cations in plasma. The protein is Heavy metal-binding protein HIP of Mytilus edulis (Blue mussel).